The sequence spans 704 residues: Tryptophan synthase (704 aa).

The segment at 1–292 (MEAIKKVFEQ…QLTPNAETAK (292 aa)) is tryptophan synthase alpha chain. Residues glutamate 49 and aspartate 60 each act as proton acceptor in the active site. Residues 293-704 (GVENILPARF…HVSSNAIPSK (412 aa)) are tryptophan synthase beta chain. Lysine 380 carries the post-translational modification N6-(pyridoxal phosphate)lysine.

It in the N-terminal section; belongs to the TrpA family. This sequence in the C-terminal section; belongs to the TrpB family. The cofactor is pyridoxal 5'-phosphate.

The enzyme catalyses (1S,2R)-1-C-(indol-3-yl)glycerol 3-phosphate + L-serine = D-glyceraldehyde 3-phosphate + L-tryptophan + H2O. Its pathway is amino-acid biosynthesis; L-tryptophan biosynthesis; L-tryptophan from chorismate: step 5/5. This is Tryptophan synthase (TRP-1) from Coprinopsis cinerea (strain Okayama-7 / 130 / ATCC MYA-4618 / FGSC 9003) (Inky cap fungus).